A 388-amino-acid polypeptide reads, in one-letter code: Phosphoribosylformylglycinamidine cyclo-ligase, chloroplastic/mitochondrial (388 aa).

Belongs to the AIR synthase family.

It localises to the plastid. It is found in the chloroplast. The protein resides in the mitochondrion. The enzyme catalyses 2-formamido-N(1)-(5-O-phospho-beta-D-ribosyl)acetamidine + ATP = 5-amino-1-(5-phospho-beta-D-ribosyl)imidazole + ADP + phosphate + H(+). The protein operates within purine metabolism; IMP biosynthesis via de novo pathway; 5-amino-1-(5-phospho-D-ribosyl)imidazole from N(2)-formyl-N(1)-(5-phospho-D-ribosyl)glycinamide: step 2/2. The sequence is that of Phosphoribosylformylglycinamidine cyclo-ligase, chloroplastic/mitochondrial (PUR5) from Vigna unguiculata (Cowpea).